We begin with the raw amino-acid sequence, 291 residues long: MRSSLVLFFVSAWTALASPIRREVSQDLFNQFNLFAQYSAAAYCGKNNDAPAGTNITCTGNACPEVEKADATFLYSFEDSGVGDVTGFLALDNTNKLIVLSFRGSRSIENWIGNLNFDLKEINDICSGCRGHDGFTSSWRSVADTLRQKVEDAVREHPDYRVVFTGHSLGGALATVAGADLRGNGYDIDVFSYGAPRVGNRAFAEFLTVQTGGTLYRITHTNDIVPRLPPREFGYSHSSPEYWIKSGTLVPVTRNDIVKIEGIDATGGNNQPNIPDIPAHLWYFGLIGTCL.

The first 17 residues, M1–A17, serve as a signal peptide directing secretion. A propeptide spanning residues S18–R22 is cleaved from the precursor. Cystine bridges form between C44/C290, C58/C63, and C126/C129. S168 serves as the catalytic Nucleophile. Active-site charge relay system residues include D223 and H280.

Belongs to the AB hydrolase superfamily. Lipase family.

It carries out the reaction a triacylglycerol + H2O = a diacylglycerol + a fatty acid + H(+). The polypeptide is Lipase (LIP) (Thermomyces lanuginosus (Humicola lanuginosa)).